The sequence spans 115 residues: NAD(P)H-quinone oxidoreductase subunit M (115 aa).

It belongs to the complex I NdhM subunit family. As to quaternary structure, NDH-1 can be composed of about 15 different subunits; different subcomplexes with different compositions have been identified which probably have different functions.

Its subcellular location is the cellular thylakoid membrane. The enzyme catalyses a plastoquinone + NADH + (n+1) H(+)(in) = a plastoquinol + NAD(+) + n H(+)(out). The catalysed reaction is a plastoquinone + NADPH + (n+1) H(+)(in) = a plastoquinol + NADP(+) + n H(+)(out). NDH-1 shuttles electrons from an unknown electron donor, via FMN and iron-sulfur (Fe-S) centers, to quinones in the respiratory and/or the photosynthetic chain. The immediate electron acceptor for the enzyme in this species is believed to be plastoquinone. Couples the redox reaction to proton translocation, and thus conserves the redox energy in a proton gradient. Cyanobacterial NDH-1 also plays a role in inorganic carbon-concentration. The chain is NAD(P)H-quinone oxidoreductase subunit M from Prochlorococcus marinus (strain NATL2A).